The following is a 275-amino-acid chain: Chemotaxis protein methyltransferase 1 (275 aa).

The region spanning 1-275 is the CheR-type methyltransferase domain; it reads MTAITISDQE…CNPGIIYKLK (275 aa). Residues asparagine 76, threonine 78, arginine 82, glutamate 117, aspartate 145, 201 to 202, and 218 to 219 contribute to the S-adenosyl-L-methionine site; these read NL and RN.

It catalyses the reaction L-glutamyl-[protein] + S-adenosyl-L-methionine = [protein]-L-glutamate 5-O-methyl ester + S-adenosyl-L-homocysteine. In terms of biological role, methylation of the membrane-bound methyl-accepting chemotaxis proteins (MCP) to form gamma-glutamyl methyl ester residues in MCP. This Vibrio cholerae serotype O1 (strain ATCC 39315 / El Tor Inaba N16961) protein is Chemotaxis protein methyltransferase 1 (cheR1).